The primary structure comprises 357 residues: GTPase Obg (357 aa).

The Obg domain occupies M1–L159. Residues A160–E343 enclose the OBG-type G domain. GTP contacts are provided by residues G166–S173, F191–Y195, D213–G216, N293–D296, and S324–V326. Mg(2+) contacts are provided by S173 and T193.

It belongs to the TRAFAC class OBG-HflX-like GTPase superfamily. OBG GTPase family. In terms of assembly, monomer. The cofactor is Mg(2+).

The protein resides in the cytoplasm. An essential GTPase which binds GTP, GDP and possibly (p)ppGpp with moderate affinity, with high nucleotide exchange rates and a fairly low GTP hydrolysis rate. Plays a role in control of the cell cycle, stress response, ribosome biogenesis and in those bacteria that undergo differentiation, in morphogenesis control. This chain is GTPase Obg, found in Xylella fastidiosa (strain M23).